The chain runs to 325 residues: Syntaxin-16 (325 aa).

At methionine 1–lysine 301 the chain is on the cytoplasmic side. Serine 41 is modified (phosphoserine). The t-SNARE coiled-coil homology domain maps to threonine 230–alanine 292. Residues methionine 302–valine 322 form a helical; Anchor for type IV membrane protein membrane-spanning segment. Topologically, residues lysine 323–arginine 325 are vesicular.

This sequence belongs to the syntaxin family. In terms of assembly, interacts with GCC2. Interacts with BAIAP3; this interaction is increased in the presence of calcium. In terms of tissue distribution, ubiquitous.

The protein localises to the golgi apparatus membrane. It is found in the cytoplasm. Functionally, SNARE involved in vesicular transport from the late endosomes to the trans-Golgi network. The chain is Syntaxin-16 (STX16) from Homo sapiens (Human).